The sequence spans 402 residues: Propionate kinase (402 aa).

ATP is bound by residues N11 and K18. Residue N11 participates in Mg(2+) binding. R86 is a binding site for substrate. The Proton donor/acceptor role is filled by D143. ATP contacts are provided by residues H175, 203 to 207 (HLGNG), 278 to 280 (DLR), and 326 to 330 (GIGEN).

This sequence belongs to the acetokinase family. TdcD subfamily. Homodimer. The cofactor is Mg(2+).

The catalysed reaction is propanoate + ATP = propanoyl phosphate + ADP. Its pathway is amino-acid degradation; L-threonine degradation via propanoate pathway; propanoate from L-threonine: step 4/4. Its function is as follows. Catalyzes the conversion of propionyl phosphate and ADP to propionate and ATP. The protein is Propionate kinase of Salmonella typhimurium (strain D23580).